Here is an 893-residue protein sequence, read N- to C-terminus: DNA mismatch repair protein MutS (893 aa).

Residue 638–645 participates in ATP binding; sequence GPNMAGKS.

Belongs to the DNA mismatch repair MutS family.

This protein is involved in the repair of mismatches in DNA. It is possible that it carries out the mismatch recognition step. This protein has a weak ATPase activity. The sequence is that of DNA mismatch repair protein MutS from Lawsonia intracellularis (strain PHE/MN1-00).